Consider the following 299-residue polypeptide: Hairy/enhancer-of-split related with YRPW motif protein 1 (299 aa).

Residues 1-53 (MKRAHPDYSSSDSELDETIEVEKESADENGNLSSALCSMSPTTSSQVLARKRR) form a disordered region. A compositionally biased stretch (polar residues) spans 28–47 (ENGNLSSALCSMSPTTSSQV). The segment at 48-117 (LARKRRRGII…GGKGYFDAHA (70 aa)) is transcriptional repression and interaction with NCOR1 and SIN3A. The bHLH domain maps to 49-104 (ARKRRRGIIEKRRRDRINNSLSELRRLVPSAFEKQGSAKLEKAEILQMTVDHLKML). The region spanning 122–158 (YRSLGFRECLAEVARYLSIIEGLDASDPLLVRLVSHL) is the Orange domain. The segment at 194-234 (LLLPQNGHGNAGTAASPTEPHHQGRLASAHPEAPALRAPPS) is disordered. Residues 289–292 (YRPW) carry the YRPW motif motif.

This sequence belongs to the HEY family. May self-associate. Interacts with HES1, NCOR1 and SIN3A. Interacts with GATA4, GATA6 and HDAC1 and HEYL. Interacts with CCDC89/BOIP. As to expression, expressed in somitic mesoderm, brain, central nervous system, kidney, heart, nasal epithelium, limbs, lung, muscle, ovary and testis.

It is found in the nucleus. In terms of biological role, transcriptional repressor which binds preferentially to the canonical E box sequence 5'-CACGTG-3'. Downstream effector of Notch signaling required for cardiovascular development. Specifically required for the Notch-induced endocardial epithelial to mesenchymal transition, which is itself criticial for cardiac valve and septum development. May be required in conjunction with HEY2 to specify arterial cell fate or identity. Promotes maintenance of neuronal precursor cells and glial versus neuronal fate specification. Represses transcription by the cardiac transcriptional activators GATA4 and GATA6 and by the neuronal bHLH factors ASCL1/MASH1 and NEUROD4/MATH3. The protein is Hairy/enhancer-of-split related with YRPW motif protein 1 (Hey1) of Mus musculus (Mouse).